A 244-amino-acid chain; its full sequence is DNA repair protein RecO (244 aa).

The protein belongs to the RecO family.

Its function is as follows. Involved in DNA repair and RecF pathway recombination. The polypeptide is DNA repair protein RecO (Nocardioides sp. (strain ATCC BAA-499 / JS614)).